The following is a 327-amino-acid chain: GMP reductase (327 aa).

C176 functions as the Thioimidate intermediate in the catalytic mechanism. 205 to 228 contacts NADP(+); it reads IIADGGIRTHGDIAKSIRFGASMV.

This sequence belongs to the IMPDH/GMPR family. GuaC type 2 subfamily.

The catalysed reaction is IMP + NH4(+) + NADP(+) = GMP + NADPH + 2 H(+). Functionally, catalyzes the irreversible NADPH-dependent deamination of GMP to IMP. It functions in the conversion of nucleobase, nucleoside and nucleotide derivatives of G to A nucleotides, and in maintaining the intracellular balance of A and G nucleotides. This is GMP reductase from Streptococcus pyogenes serotype M28 (strain MGAS6180).